The primary structure comprises 147 residues: Hemoglobin subunit beta-2 (147 aa).

Residues 3–147 (EWTDSERAII…VVSALGRQYH (145 aa)) enclose the Globin domain. His64 and His93 together coordinate heme b.

This sequence belongs to the globin family. In terms of assembly, hb 3 is a heterotetramer of two alpha-2 and two beta-2 chains. As to expression, red blood cells.

In terms of biological role, involved in oxygen transport from gills to the various peripheral tissues. The chain is Hemoglobin subunit beta-2 (hbb2) from Arctogadus glacialis (Arctic cod).